We begin with the raw amino-acid sequence, 386 residues long: MTRKQATIAVRSGLNDDEQYGCVVPPIHLSSTYNFTGFNEPRAHDYSRRGNPTRDVVQRALAELEGGAGAVLTNTGMSAIHLVTTVFLKPGDLLVAPHDCYGGSYRLFDSLAKRGCYRVLFVDQGDEQALRAALAEKPKLVLVESPSNPLLRVVDIAKICHLAREVGAVSVVDNTFLSPALQNPLALGADLVLHSCTKYLNGHSDVVAGVVIAKDPDVVTELAWWANNIGVTGGAFDSYLLLRGLRTLVPRMELAQRNAQAIVKYLQTQPLVKKLYHPSLPENQGHEIAARQQKGFGAMLSFELDGDEQTLRRFLGGLSLFTLAESLGGVESLISHAATMTHAGMAPEARAAAGISETLLRISTGIEDGEDLIADLENGFRAANKG.

K198 bears the N6-(pyridoxal phosphate)lysine mark.

Belongs to the trans-sulfuration enzymes family. Homotetramer. The cofactor is pyridoxal 5'-phosphate.

The protein resides in the cytoplasm. It carries out the reaction O-succinyl-L-homoserine + L-cysteine = L,L-cystathionine + succinate + H(+). The protein operates within amino-acid biosynthesis; L-methionine biosynthesis via de novo pathway; L-cystathionine from O-succinyl-L-homoserine: step 1/1. Its function is as follows. Catalyzes the formation of L-cystathionine from O-succinyl-L-homoserine (OSHS) and L-cysteine, via a gamma-replacement reaction. In the absence of thiol, catalyzes gamma-elimination to form 2-oxobutanoate, succinate and ammonia. The chain is Cystathionine gamma-synthase (metB) from Escherichia coli (strain K12).